A 122-amino-acid chain; its full sequence is Large ribosomal subunit protein uL14 (122 aa).

This sequence belongs to the universal ribosomal protein uL14 family. Part of the 50S ribosomal subunit. Forms a cluster with proteins L3 and L19. In the 70S ribosome, L14 and L19 interact and together make contacts with the 16S rRNA in bridges B5 and B8.

Binds to 23S rRNA. Forms part of two intersubunit bridges in the 70S ribosome. This Chlorobium phaeovibrioides (strain DSM 265 / 1930) (Prosthecochloris vibrioformis (strain DSM 265)) protein is Large ribosomal subunit protein uL14.